Reading from the N-terminus, the 141-residue chain is Pheromone-binding protein-related protein 6 (141 aa).

Residues 1–16 (MVKYPLILLLIGCAAA) form the signal peptide. 3 disulfide bridges follow: C41–C72, C68–C120, and C111–C129.

The protein belongs to the PBP/GOBP family. Antenna. Mostly expressed in two types of sensory hairs, sensilla trichodea and small sensilla basiconica, in the ventro-lateral region of the third antennal segment (at protein level).

Its subcellular location is the secreted. The protein is Pheromone-binding protein-related protein 6 (Obp83b) of Drosophila melanogaster (Fruit fly).